Consider the following 375-residue polypeptide: Kininogen (375 aa).

The signal sequence occupies residues 1–23; sequence MKLGVRLCVLVVFSLQLWGPGQG. Cystatin kininogen-type domains are found at residues 35-139 and 156-260; these read CDDK…VEAP and VESE…GPLD. A glycan (N-linked (GlcNAc) asparagine) is linked at asparagine 74. 4 disulfides stabilise this stretch: cysteine 91/cysteine 102, cysteine 115/cysteine 133, cysteine 211/cysteine 223, and cysteine 234/cysteine 254. The N-linked (GlcNAc) asparagine glycan is linked to asparagine 235. The interval 283–375 is disordered; sequence EVKTTQASTA…LSDLDLLGKK (93 aa).

N-glycosylated, with sialylated biantennary complex-type glycans. Post-translationally, O-glycosylated, sialylated oligosaccharides. In terms of processing, bradykinin is released from kininogen by kallikrein. The N-terminus is blocked. In terms of tissue distribution, expressed in the skin, liver, intestine, spleen, pancreas and kidney.

It is found in the cytoplasm. Its subcellular location is the vacuole. Functionally, inhibits papain and ficin (cysteine proteinases) but not trypsin (a serine proteinase). The chain is Kininogen (LOC106584303) from Salmo salar (Atlantic salmon).